Reading from the N-terminus, the 142-residue chain is uncharacterized protein (142 aa).

It belongs to the IIV-6 115R family.

This is an uncharacterized protein from Invertebrate iridescent virus 3 (IIV-3).